The sequence spans 67 residues: ESSNKRENQKQIVDKHNALRRSVRPTARNMLQMEWNSNAAQNAKRFADRCTFAHSPPHLRTVGIFSC.

One can recognise an SCP domain in the interval 13–58 (VDKHNALRRSVRPTARNMLQMEWNSNAAQNAKRFADRCTFAHSPPH).

Belongs to the CRISP family. Post-translationally, contains 8 disulfide bonds. As to expression, expressed by the venom gland.

Its subcellular location is the secreted. Functionally, blocks contraction of smooth muscle elicited by high potassium-induced depolarization, but does not block caffeine-stimulated contraction. May target voltage-gated calcium channels on smooth muscle. This chain is Cysteine-rich venom protein bucarin, found in Bungarus candidus (Malayan krait).